We begin with the raw amino-acid sequence, 205 residues long: Thymidylate kinase (205 aa).

An ATP-binding site is contributed by 9-16; it reads GPEGSGKT.

It belongs to the thymidylate kinase family.

It catalyses the reaction dTMP + ATP = dTDP + ADP. In terms of biological role, phosphorylation of dTMP to form dTDP in both de novo and salvage pathways of dTTP synthesis. The polypeptide is Thymidylate kinase (Staphylococcus aureus (strain MSSA476)).